Consider the following 353-residue polypeptide: UDP-3-O-acylglucosamine N-acyltransferase (353 aa).

The active-site Proton acceptor is H242.

Belongs to the transferase hexapeptide repeat family. LpxD subfamily. In terms of assembly, homotrimer.

The catalysed reaction is a UDP-3-O-[(3R)-3-hydroxyacyl]-alpha-D-glucosamine + a (3R)-hydroxyacyl-[ACP] = a UDP-2-N,3-O-bis[(3R)-3-hydroxyacyl]-alpha-D-glucosamine + holo-[ACP] + H(+). It participates in bacterial outer membrane biogenesis; LPS lipid A biosynthesis. Its function is as follows. Catalyzes the N-acylation of UDP-3-O-acylglucosamine using 3-hydroxyacyl-ACP as the acyl donor. Is involved in the biosynthesis of lipid A, a phosphorylated glycolipid that anchors the lipopolysaccharide to the outer membrane of the cell. This is UDP-3-O-acylglucosamine N-acyltransferase from Pseudomonas paraeruginosa (strain DSM 24068 / PA7) (Pseudomonas aeruginosa (strain PA7)).